Here is a 203-residue protein sequence, read N- to C-terminus: MSVIAYLLILGAYLLGSISSAVIFCRLAGLPDPREHGSHNPGATNVLRIGGKLSALGVLMADILKGMLPVSLGFYLELPISVIGFIALAACLGHIFPVFFKFQGGKGVATAFGAIIPMGYSVAGLAVGTWLFVFLISGYSSLSAVITALIVPLYIWWFSSELTFPVALVCCLLVYRHHDNIQRLWRGQEDRGWKKKHSRQNGY.

The next 5 membrane-spanning stretches (helical) occupy residues 4–24 (IAYLLILGAYLLGSISSAVIF), 56–76 (LGVLMADILKGMLPVSLGFYL), 80–100 (ISVIGFIALAACLGHIFPVFF), 115–135 (IIPMGYSVAGLAVGTWLFVFL), and 149–169 (LIVPLYIWWFSSELTFPVALV).

The protein belongs to the PlsY family. Probably interacts with PlsX.

The protein resides in the cell inner membrane. It carries out the reaction an acyl phosphate + sn-glycerol 3-phosphate = a 1-acyl-sn-glycero-3-phosphate + phosphate. It functions in the pathway lipid metabolism; phospholipid metabolism. In terms of biological role, catalyzes the transfer of an acyl group from acyl-phosphate (acyl-PO(4)) to glycerol-3-phosphate (G3P) to form lysophosphatidic acid (LPA). This enzyme utilizes acyl-phosphate as fatty acyl donor, but not acyl-CoA or acyl-ACP. This Glaesserella parasuis serovar 5 (strain SH0165) (Haemophilus parasuis) protein is Glycerol-3-phosphate acyltransferase.